The sequence spans 78 residues: RNA-binding protein KhpA (78 aa).

In terms of domain architecture, KH spans 29–78 (TIIYELTVAKGDIGKIIGKEGRTIKAIRTLLVSVASRDNVKVSLEIMEER).

This sequence belongs to the KhpA RNA-binding protein family.

It localises to the cytoplasm. A probable RNA-binding protein. In Chlamydia muridarum (strain MoPn / Nigg), this protein is RNA-binding protein KhpA.